A 682-amino-acid polypeptide reads, in one-letter code: Serine/threonine-protein kinase PLK2 (682 aa).

Residues 25 to 67 (ACGGDSKKKRPQQPSEDGQPQAQVTPAAPHHHHHHSHSGPEIS) form a disordered region. Positions 36-48 (QQPSEDGQPQAQV) are enriched in polar residues. The 253-residue stretch at 79–331 (YCRGKVLGKG…LDDIIRHDFF (253 aa)) folds into the Protein kinase domain. ATP-binding positions include 85-93 (LGKGGFAKC) and Lys-108. Asp-202 (proton acceptor) is an active-site residue. Residue Thr-236 is modified to Phosphothreonine. Residues 403-432 (SITQQPSKHRADEEPQPPPTTVARSGTSAV) are disordered. POLO box domains are found at residues 500-578 (WVTK…YMEE) and 598-682 (YLLQ…QRCN).

The protein belongs to the protein kinase superfamily. Ser/Thr protein kinase family. CDC5/Polo subfamily. As to quaternary structure, interacts with NSF; causing NSF dissociation from GRIA2. Interacts with CIB1. Post-translationally, catalytic activity is enhanced by phosphorylation of Thr-236. In terms of tissue distribution, brain, lung and heart.

The protein resides in the cytoplasm. It is found in the cytoskeleton. Its subcellular location is the microtubule organizing center. It localises to the centrosome. The protein localises to the centriole. The protein resides in the cell projection. It is found in the dendrite. The catalysed reaction is L-seryl-[protein] + ATP = O-phospho-L-seryl-[protein] + ADP + H(+). It carries out the reaction L-threonyl-[protein] + ATP = O-phospho-L-threonyl-[protein] + ADP + H(+). Its activity is regulated as follows. Activated by phosphorylation of Thr-236. Once activated, activity is stimulated by binding target proteins. Its function is as follows. Tumor suppressor serine/threonine-protein kinase involved in synaptic plasticity, centriole duplication and G1/S phase transition. Polo-like kinases act by binding and phosphorylating proteins that are already phosphorylated on a specific motif recognized by the POLO box domains. Phosphorylates CPAP, NPM1, RAPGEF2, RASGRF1, SNCA, SIPA1L1 and SYNGAP1. Plays a key role in synaptic plasticity and memory by regulating the Ras and Rap protein signaling: required for overactivity-dependent spine remodeling by phosphorylating the Ras activator RASGRF1 and the Rap inhibitor SIPA1L1 leading to their degradation by the proteasome. Conversely, phosphorylates the Rap activator RAPGEF2 and the Ras inhibitor SYNGAP1, promoting their activity. Also regulates synaptic plasticity independently of kinase activity, via its interaction with NSF that disrupts the interaction between NSF and the GRIA2 subunit of AMPARs, leading to a rapid rundown of AMPAR-mediated current that occludes long term depression. Required for procentriole formation and centriole duplication by phosphorylating CPAP and NPM1, respectively. Its induction by p53/TP53 suggests that it may participate in the mitotic checkpoint following stress. The polypeptide is Serine/threonine-protein kinase PLK2 (Plk2) (Mus musculus (Mouse)).